The sequence spans 588 residues: Proteasome-associated ATPase (588 aa).

Residues 1 to 10 (MAAHDDDMNR) are compositionally biased toward basic and acidic residues. Positions 1-23 (MAAHDDDMNRGIRPGRGSEDPAG) are disordered. Residues 47-94 (RILEERIVELQTNLAGVSAQNERLAGTLREARDQIVALKEEVDRLAQP) adopt a coiled-coil conformation. 276-281 (GCGKTL) lines the ATP pocket. Positions 587 to 588 (YL) are docks into pockets in the proteasome alpha-ring.

The protein belongs to the AAA ATPase family. In terms of assembly, homohexamer. Assembles into a hexameric ring structure that caps the 20S proteasome core. Strongly interacts with the prokaryotic ubiquitin-like protein Pup through a hydrophobic interface; the interacting region of ARC lies in its N-terminal coiled-coil domain. There is one Pup binding site per ARC hexamer ring. Upon ATP-binding, the C-terminus of ARC interacts with the alpha-rings of the proteasome core, possibly by binding to the intersubunit pockets.

It functions in the pathway protein degradation; proteasomal Pup-dependent pathway. Its function is as follows. ATPase which is responsible for recognizing, binding, unfolding and translocation of pupylated proteins into the bacterial 20S proteasome core particle. May be essential for opening the gate of the 20S proteasome via an interaction with its C-terminus, thereby allowing substrate entry and access to the site of proteolysis. Thus, the C-termini of the proteasomal ATPase may function like a 'key in a lock' to induce gate opening and therefore regulate proteolysis. In Streptomyces coelicolor (strain ATCC BAA-471 / A3(2) / M145), this protein is Proteasome-associated ATPase.